We begin with the raw amino-acid sequence, 837 residues long: Mannosyl-oligosaccharide glucosidase (837 aa).

Residues 1–10 (MARGERRRRA) show a composition bias toward basic residues. Residues 1 to 38 (MARGERRRRAVPAEGVRTAERAARGGPGRRDGRGGGPR) lie on the Cytoplasmic side of the membrane. Residues 1-39 (MARGERRRRAVPAEGVRTAERAARGGPGRRDGRGGGPRS) form a disordered region. Residues 3-9 (RGERRRR) carry the Endoplasmic reticulum targeting motif. Basic and acidic residues predominate over residues 17–33 (RTAERAARGGPGRRDGR). A helical; Signal-anchor for type II membrane protein transmembrane segment spans residues 39–59 (STAGGVALAVVVLSLALGMSG). Over 60 to 837 (RWVLAWYRAR…LVLLAMAEDY (778 aa)) the chain is Lumenal. The interval 76–137 (SAPPVLPADS…PGTPKLRHTC (62 aa)) is required for endoplasmic reticulum targeting. Catalysis depends on Asp-583, which acts as the Proton donor. Asn-657 carries N-linked (GlcNAc...) asparagine glycosylation. Catalysis depends on Glu-807, which acts as the Proton acceptor.

The protein belongs to the glycosyl hydrolase 63 family.

The protein localises to the endoplasmic reticulum membrane. It carries out the reaction N(4)-(alpha-D-Glc-(1-&gt;2)-alpha-D-Glc-(1-&gt;3)-alpha-D-Glc-(1-&gt;3)-alpha-D-Man-(1-&gt;2)-alpha-D-Man-(1-&gt;2)-alpha-D-Man-(1-&gt;3)-[alpha-D-Man-(1-&gt;2)-alpha-D-Man-(1-&gt;3)-[alpha-D-Man-(1-&gt;2)-alpha-D-Man-(1-&gt;6)]-alpha-D-Man-(1-&gt;6)]-beta-D-Man-(1-&gt;4)-beta-D-GlcNAc-(1-&gt;4)-beta-D-GlcNAc)-L-asparaginyl-[protein] + H2O = N(4)-(alpha-D-Glc-(1-&gt;3)-alpha-D-Glc-(1-&gt;3)-alpha-D-Man-(1-&gt;2)-alpha-D-Man-(1-&gt;2)-alpha-D-Man-(1-&gt;3)-[alpha-D-Man-(1-&gt;2)-alpha-D-Man-(1-&gt;3)-[alpha-D-Man-(1-&gt;2)-alpha-D-Man-(1-&gt;6)]-alpha-D-Man-(1-&gt;6)]-beta-D-Man-(1-&gt;4)-beta-D-GlcNAc-(1-&gt;4)-beta-D-GlcNAc)-L-asparaginyl-[protein] + beta-D-glucose. It functions in the pathway glycan metabolism; N-glycan degradation. Inhibited by 1-deoxynojirimycin (40% inhibition) and N,N-dimethyl-deoxynojirimycin (85% inhibition). In terms of biological role, in the context of N-glycan degradation, cleaves the distal alpha 1,2-linked glucose residue from the Glc(3)Man(9)GlcNAc(2) oligosaccharide precursor in a highly specific manner. The polypeptide is Mannosyl-oligosaccharide glucosidase (Homo sapiens (Human)).